A 200-amino-acid polypeptide reads, in one-letter code: Large ribosomal subunit protein uL4 (200 aa).

Positions 38–68 (GRQGSKQQKTRSDVRGGGKRPWRQKGTGRAR) are disordered. The segment covering 54-65 (GGKRPWRQKGTG) has biased composition (basic residues).

The protein belongs to the universal ribosomal protein uL4 family. In terms of assembly, part of the 50S ribosomal subunit.

In terms of biological role, one of the primary rRNA binding proteins, this protein initially binds near the 5'-end of the 23S rRNA. It is important during the early stages of 50S assembly. It makes multiple contacts with different domains of the 23S rRNA in the assembled 50S subunit and ribosome. Functionally, forms part of the polypeptide exit tunnel. The chain is Large ribosomal subunit protein uL4 from Pseudomonas syringae pv. tomato (strain ATCC BAA-871 / DC3000).